The primary structure comprises 146 residues: D-aminoacyl-tRNA deacylase (146 aa).

The Gly-cisPro motif, important for rejection of L-amino acids motif lies at 138–139 (GP).

This sequence belongs to the DTD family. In terms of assembly, homodimer.

The protein resides in the cytoplasm. The catalysed reaction is glycyl-tRNA(Ala) + H2O = tRNA(Ala) + glycine + H(+). It catalyses the reaction a D-aminoacyl-tRNA + H2O = a tRNA + a D-alpha-amino acid + H(+). Its function is as follows. An aminoacyl-tRNA editing enzyme that deacylates mischarged D-aminoacyl-tRNAs. Also deacylates mischarged glycyl-tRNA(Ala), protecting cells against glycine mischarging by AlaRS. Acts via tRNA-based rather than protein-based catalysis; rejects L-amino acids rather than detecting D-amino acids in the active site. By recycling D-aminoacyl-tRNA to D-amino acids and free tRNA molecules, this enzyme counteracts the toxicity associated with the formation of D-aminoacyl-tRNA entities in vivo and helps enforce protein L-homochirality. The polypeptide is D-aminoacyl-tRNA deacylase (Stenotrophomonas maltophilia (strain R551-3)).